A 478-amino-acid polypeptide reads, in one-letter code: MESSFEASKSLNENRDDIELIPTQSQGSPSLSSSSTITSTSRLGSNQVLIRIYFIDDTHKTLSIDPNNTTGDQLWEMVSEKLGINNRDSECFFVWAQNDEIEWLLFNHQNISEVIKNWGILKKRYCNTEENSPSSSTSSPILSGLSSIRGKKSNASSTSNANDGSGSGSGSGSGSGSGSGTSTPNSPKGGLSGFLTLGRKNKAQSPQLQSQSSSLSTTIASEHASKLRSSFPTLGEEGQFRLVYRPTSVLPLELERSINTAEATHLFYIQAIHNVINSNYPCEEDVALKLASIQLQVLVGDQKMEHQDHFKESISRYIPSHLLSKRKAEEWEQLVIPQHSLLRGSDSLQLKRAYLETCQRWAYYGSTFFKAKYIPANTSFFTQEFQGKVSIGINGNGFHIIDPKEMKMVSYSYRDIIAWDSTSNSFTIKFKIGQDKKFETKPYIFKTPQGELINDLISDWSEEWESKEKKNNKDSKKK.

Disordered regions lie at residues 19 to 39 (ELIPTQSQGSPSLSSSSTITS), 129 to 196 (EENS…GFLT), and 202 to 221 (KAQSPQLQSQSSSLSTTIAS). Low complexity-rich tracts occupy residues 22-39 (PTQSQGSPSLSSSSTITS) and 129-164 (EENSPSSSTSSPILSGLSSIRGKKSNASSTSNANDG). An FERM domain is found at 48-468 (VLIRIYFIDD…DWSEEWESKE (421 aa)). Over residues 165–179 (SGSGSGSGSGSGSGS) the composition is skewed to gly residues. Low complexity-rich tracts occupy residues 180–189 (GTSTPNSPKG) and 204–216 (QSPQLQSQSSSLS).

In Dictyostelium discoideum (Social amoeba), this protein is FERM domain-containing protein B (frmB).